The primary structure comprises 385 residues: Probable dual-specificity RNA methyltransferase RlmN (385 aa).

The segment at 1-24 (MTATTAESGNLLPLVSGRSRPPRH) is disordered. The Proton acceptor role is filled by E114. A Radical SAM core domain is found at 120–364 (YPQRATVCVS…AATVRDTRGR (245 aa)). A disulfide bridge connects residues C127 and C370. C134, C138, and C141 together coordinate [4Fe-4S] cluster. S-adenosyl-L-methionine contacts are provided by residues 194-195 (GE), S228, 251-253 (SLH), and N327. Catalysis depends on C370, which acts as the S-methylcysteine intermediate.

It belongs to the radical SAM superfamily. RlmN family. The cofactor is [4Fe-4S] cluster.

Its subcellular location is the cytoplasm. It carries out the reaction adenosine(2503) in 23S rRNA + 2 reduced [2Fe-2S]-[ferredoxin] + 2 S-adenosyl-L-methionine = 2-methyladenosine(2503) in 23S rRNA + 5'-deoxyadenosine + L-methionine + 2 oxidized [2Fe-2S]-[ferredoxin] + S-adenosyl-L-homocysteine. The enzyme catalyses adenosine(37) in tRNA + 2 reduced [2Fe-2S]-[ferredoxin] + 2 S-adenosyl-L-methionine = 2-methyladenosine(37) in tRNA + 5'-deoxyadenosine + L-methionine + 2 oxidized [2Fe-2S]-[ferredoxin] + S-adenosyl-L-homocysteine. Specifically methylates position 2 of adenine 2503 in 23S rRNA and position 2 of adenine 37 in tRNAs. This chain is Probable dual-specificity RNA methyltransferase RlmN, found in Parafrankia sp. (strain EAN1pec).